The sequence spans 534 residues: CTP synthase (534 aa).

The segment at 1 to 267 (MTKYIFVTGG…GDLIIERLAL (267 aa)) is amidoligase domain. A CTP-binding site is contributed by Ser-13. Position 13 (Ser-13) interacts with UTP. 14 to 19 (SVGKGI) provides a ligand contact to ATP. Residue Tyr-54 coordinates L-glutamine. Asp-71 is a binding site for ATP. Mg(2+)-binding residues include Asp-71 and Glu-141. Residues 148 to 150 (DIE), 188 to 193 (KTKPTQ), and Lys-224 contribute to the CTP site. UTP is bound by residues 188–193 (KTKPTQ) and Lys-224. Residues 292-534 (TVAIVGKYVE…VQAALEQIAE (243 aa)) form the Glutamine amidotransferase type-1 domain. Position 354 (Gly-354) interacts with L-glutamine. Catalysis depends on Cys-381, which acts as the Nucleophile; for glutamine hydrolysis. Residues 382 to 385 (LGMQ), Glu-405, and Arg-462 each bind L-glutamine. Active-site residues include His-507 and Glu-509.

Belongs to the CTP synthase family. Homotetramer.

It catalyses the reaction UTP + L-glutamine + ATP + H2O = CTP + L-glutamate + ADP + phosphate + 2 H(+). The enzyme catalyses L-glutamine + H2O = L-glutamate + NH4(+). The catalysed reaction is UTP + NH4(+) + ATP = CTP + ADP + phosphate + 2 H(+). Its pathway is pyrimidine metabolism; CTP biosynthesis via de novo pathway; CTP from UDP: step 2/2. With respect to regulation, allosterically activated by GTP, when glutamine is the substrate; GTP has no effect on the reaction when ammonia is the substrate. The allosteric effector GTP functions by stabilizing the protein conformation that binds the tetrahedral intermediate(s) formed during glutamine hydrolysis. Inhibited by the product CTP, via allosteric rather than competitive inhibition. In terms of biological role, catalyzes the ATP-dependent amination of UTP to CTP with either L-glutamine or ammonia as the source of nitrogen. Regulates intracellular CTP levels through interactions with the four ribonucleotide triphosphates. This Herpetosiphon aurantiacus (strain ATCC 23779 / DSM 785 / 114-95) protein is CTP synthase.